Reading from the N-terminus, the 459-residue chain is uncharacterized protein (459 aa).

The TRAM domain maps to 5 to 63 (PVEEGQKFPLTIRRMGINGEGIGYFKKAVVFVPGAITGEEVVVEAVKVRDRFTEAKLNK). 4 residues coordinate [4Fe-4S] cluster: Cys76, Cys82, Cys85, and Cys166. Residues Gln290, Tyr319, Asp340, and Asp388 each contribute to the S-adenosyl-L-methionine site. The active-site Nucleophile is Cys415.

Belongs to the class I-like SAM-binding methyltransferase superfamily. RNA M5U methyltransferase family.

This is an uncharacterized protein from Listeria monocytogenes serovar 1/2a (strain ATCC BAA-679 / EGD-e).